The following is a 56-amino-acid chain: Large ribosomal subunit protein bL32 (56 aa).

It belongs to the bacterial ribosomal protein bL32 family.

This chain is Large ribosomal subunit protein bL32, found in Prochlorococcus marinus (strain MIT 9301).